Reading from the N-terminus, the 317-residue chain is Melanocyte-stimulating hormone receptor (317 aa).

The Extracellular segment spans residues 1-37 (MPVLGSQRRLLGSLNCTPPATFSLTLAPNRTGPQCLE). Asn-29 carries an N-linked (GlcNAc...) asparagine glycan. A helical membrane pass occupies residues 38–63 (VSIPDGLFLSLGLVSLVENVLVVAAI). The Cytoplasmic portion of the chain corresponds to 64–72 (AKNRNLHSP). The chain crosses the membrane as a helical span at residues 73-93 (MYYFICCLAVSDLLVSVSNVL). At 94–118 (ETAVMLLLEAGALAARAAVVQQLDN) the chain is on the extracellular side. The chain crosses the membrane as a helical span at residues 119 to 140 (VIDVLICGSMVSSLCFLGAIAM). Over 141–163 (DRYISIFYALRYHSVVTLPRAWR) the chain is Cytoplasmic. Residues 164-183 (IIAAIWVASILTSLLFITYY) traverse the membrane as a helical segment. The Extracellular segment spans residues 184 to 191 (NHTVVLLC). The chain crosses the membrane as a helical span at residues 192 to 211 (LVGFFIAMLALMAILYVHML). At 212–240 (ARACQHARDIARLQKRQHPIHQGFGLKGA) the chain is on the cytoplasmic side. Residues 241–266 (ATLTILLGVFFLCWGPFFLHLSLIVL) form a helical membrane-spanning segment. Residues 267–279 (CPQHPTCGCIFKN) are Extracellular-facing. Residues 280-300 (FNLFLALIICNAIVDPLIYAF) traverse the membrane as a helical segment. At 301–317 (RSQELRKTLQEVLQCSW) the chain is on the cytoplasmic side. The S-palmitoyl cysteine moiety is linked to residue Cys-315.

Belongs to the G-protein coupled receptor 1 family. In terms of assembly, interacts with MGRN1, but does not undergo MGRN1-mediated ubiquitination; this interaction competes with GNAS-binding and thus inhibits agonist-induced cAMP production. Interacts with OPN3; the interaction results in a decrease in MC1R-mediated cAMP signaling and ultimately a decrease in melanin production in melanocytes.

It is found in the cell membrane. Functionally, receptor for MSH (alpha, beta and gamma) and ACTH. The activity of this receptor is mediated by G proteins which activate adenylate cyclase. Mediates melanogenesis, the production of eumelanin (black/brown) and phaeomelanin (red/yellow), via regulation of cAMP signaling in melanocytes. This is Melanocyte-stimulating hormone receptor (MC1R) from Alces alces alces (European moose).